The sequence spans 61 residues: 14-3-3-like protein (61 aa).

The protein belongs to the 14-3-3 family.

The polypeptide is 14-3-3-like protein (Zea mays (Maize)).